Reading from the N-terminus, the 397-residue chain is RNA binding protein fox-1 homolog 1 (397 aa).

Residues 1–121 (MNCEREQLRG…NKSQPKRLHV (121 aa)) are disordered. Polar residues predominate over residues 70 to 87 (QTHSEQSPADTSAQTVSG). Residues 88–99 (TATQTDDAAPTD) show a composition bias toward low complexity. Positions 100 to 113 (GQPQTQPSENTENK) are enriched in polar residues. Residues 117-193 (KRLHVSNIPF…RKIEVNNATA (77 aa)) form the RRM domain. Asymmetric dimethylarginine is present on Arg317. The residue at position 388 (Arg388) is an Omega-N-methylarginine.

Binds to the C-terminus of ATXN2. As to expression, predominantly expressed in muscle and brain.

The protein resides in the nucleus. It localises to the cytoplasm. RNA-binding protein that regulates alternative splicing events by binding to 5'-UGCAUGU-3' elements. Regulates alternative splicing of tissue-specific exons and of differentially spliced exons during erythropoiesis. In Homo sapiens (Human), this protein is RNA binding protein fox-1 homolog 1 (RBFOX1).